A 251-amino-acid polypeptide reads, in one-letter code: Cytochrome c oxidase subunit 2 (251 aa).

Helical transmembrane passes span 42–62 (NIMFYLFIILGLVSWMLFTIV) and 83–103 (IIWTMFPAVILLIIAFPSFIL). Cu cation contacts are provided by His-186, Cys-221, Glu-223, Cys-225, His-229, and Met-232. Glu-223 provides a ligand contact to Mg(2+).

The protein belongs to the cytochrome c oxidase subunit 2 family. As to quaternary structure, component of the cytochrome c oxidase (complex IV, CIV), a multisubunit enzyme composed of a catalytic core of 3 subunits and several supernumerary subunits. The complex exists as a monomer or a dimer and forms supercomplexes (SCs) in the inner mitochondrial membrane with ubiquinol-cytochrome c oxidoreductase (cytochrome b-c1 complex, complex III, CIII). Requires Cu cation as cofactor.

It is found in the mitochondrion inner membrane. It catalyses the reaction 4 Fe(II)-[cytochrome c] + O2 + 8 H(+)(in) = 4 Fe(III)-[cytochrome c] + 2 H2O + 4 H(+)(out). Functionally, component of the cytochrome c oxidase, the last enzyme in the mitochondrial electron transport chain which drives oxidative phosphorylation. The respiratory chain contains 3 multisubunit complexes succinate dehydrogenase (complex II, CII), ubiquinol-cytochrome c oxidoreductase (cytochrome b-c1 complex, complex III, CIII) and cytochrome c oxidase (complex IV, CIV), that cooperate to transfer electrons derived from NADH and succinate to molecular oxygen, creating an electrochemical gradient over the inner membrane that drives transmembrane transport and the ATP synthase. Cytochrome c oxidase is the component of the respiratory chain that catalyzes the reduction of oxygen to water. Electrons originating from reduced cytochrome c in the intermembrane space (IMS) are transferred via the dinuclear copper A center (CU(A)) of subunit 2 and heme A of subunit 1 to the active site in subunit 1, a binuclear center (BNC) formed by heme A3 and copper B (CU(B)). The BNC reduces molecular oxygen to 2 water molecules using 4 electrons from cytochrome c in the IMS and 4 protons from the mitochondrial matrix. The chain is Cytochrome c oxidase subunit 2 (COX2) from Candida glabrata (strain ATCC 2001 / BCRC 20586 / JCM 3761 / NBRC 0622 / NRRL Y-65 / CBS 138) (Yeast).